Consider the following 673-residue polypeptide: Inactive polyglycylase TTLL10 (673 aa).

Residues 1-132 (MDHSCTRFIH…ADSDDTNAAG (132 aa)) form a disordered region. Over residues 8 to 36 (FIHRRGPPTRTRAGFKRGKRPRIQQRPRA) the composition is skewed to basic residues. Pro residues predominate over residues 52-62 (ASQPGPCPAPG). Residues 89–105 (PDHDADGHCGPDLEGAE) are compositionally biased toward basic and acidic residues. A TTL domain is found at 155–552 (PGPFFYIGGS…TFRKSLRGQK (398 aa)). Residues 362–365 (QRYI), K375, and D377 contribute to the ATP site. Residues 569–673 (EADPRPHLGG…EREEPENARP (105 aa)) are disordered. Over residues 612–627 (PAPPPLVPQRPRPPGP) the composition is skewed to pro residues. The segment covering 661-673 (AKEEREEPENARP) has biased composition (basic and acidic residues).

Inactive polyglycylase. This chain is Inactive polyglycylase TTLL10, found in Homo sapiens (Human).